Consider the following 311-residue polypeptide: Protoheme IX farnesyltransferase (311 aa).

Transmembrane regions (helical) follow at residues V32–N52, P53–L73, F104–W124, F125–L145, I153–G173, F180–F200, K224–D244, F245–A265, and F290–I310.

The protein belongs to the UbiA prenyltransferase family. Protoheme IX farnesyltransferase subfamily.

It localises to the cell inner membrane. The catalysed reaction is heme b + (2E,6E)-farnesyl diphosphate + H2O = Fe(II)-heme o + diphosphate. The protein operates within porphyrin-containing compound metabolism; heme O biosynthesis; heme O from protoheme: step 1/1. Functionally, converts heme B (protoheme IX) to heme O by substitution of the vinyl group on carbon 2 of heme B porphyrin ring with a hydroxyethyl farnesyl side group. This Bartonella quintana (strain Toulouse) (Rochalimaea quintana) protein is Protoheme IX farnesyltransferase.